The chain runs to 212 residues: Peptide methionine sulfoxide reductase MsrA (212 aa).

Residues 1 to 14 show a composition bias toward polar residues; the sequence is MSSIDKTQRITQSD. The segment at 1–21 is disordered; sequence MSSIDKTQRITQSDALPGRST. C52 is a catalytic residue.

Belongs to the MsrA Met sulfoxide reductase family.

The enzyme catalyses L-methionyl-[protein] + [thioredoxin]-disulfide + H2O = L-methionyl-(S)-S-oxide-[protein] + [thioredoxin]-dithiol. It catalyses the reaction [thioredoxin]-disulfide + L-methionine + H2O = L-methionine (S)-S-oxide + [thioredoxin]-dithiol. Its function is as follows. Has an important function as a repair enzyme for proteins that have been inactivated by oxidation. Catalyzes the reversible oxidation-reduction of methionine sulfoxide in proteins to methionine. This Pectobacterium carotovorum subsp. carotovorum (strain PC1) protein is Peptide methionine sulfoxide reductase MsrA.